An 86-amino-acid polypeptide reads, in one-letter code: U15-lycotoxin-Ls1d (86 aa).

Residues 1 to 20 form the signal peptide; sequence MNSKIFAVLLLLGLLSCVLS. The 46-residue stretch at 21–66 folds into the WAP domain; sequence DQYCPKSSITACKKMNIRNDCCKDDDCTGGSWCCATPCGNFCKYPT. 5 disulfides stabilise this stretch: C24-C54, C32-C58, C41-C53, C42-C80, and C47-C62.

This sequence belongs to the venom protein 11 family. 01 (wap-1) subfamily. In terms of processing, contains 5 disulfide bonds. In terms of tissue distribution, expressed by the venom gland.

The protein resides in the secreted. Functionally, has antibacterial activity. In Lycosa singoriensis (Wolf spider), this protein is U15-lycotoxin-Ls1d.